A 273-amino-acid chain; its full sequence is Dermonecrotic toxin LhSicTox-alphaIA1i (273 aa).

His-5 is an active-site residue. Mg(2+) contacts are provided by Glu-25 and Asp-27. Catalysis depends on His-41, which acts as the Nucleophile. 2 cysteine pairs are disulfide-bonded: Cys-45–Cys-51 and Cys-47–Cys-190. Residue Asp-85 coordinates Mg(2+).

The protein belongs to the arthropod phospholipase D family. Class II subfamily. The cofactor is Mg(2+). As to expression, expressed by the venom gland.

Its subcellular location is the secreted. It catalyses the reaction an N-(acyl)-sphingosylphosphocholine = an N-(acyl)-sphingosyl-1,3-cyclic phosphate + choline. The enzyme catalyses an N-(acyl)-sphingosylphosphoethanolamine = an N-(acyl)-sphingosyl-1,3-cyclic phosphate + ethanolamine. It carries out the reaction a 1-acyl-sn-glycero-3-phosphocholine = a 1-acyl-sn-glycero-2,3-cyclic phosphate + choline. The catalysed reaction is a 1-acyl-sn-glycero-3-phosphoethanolamine = a 1-acyl-sn-glycero-2,3-cyclic phosphate + ethanolamine. In terms of biological role, dermonecrotic toxins cleave the phosphodiester linkage between the phosphate and headgroup of certain phospholipids (sphingolipid and lysolipid substrates), forming an alcohol (often choline) and a cyclic phosphate. This toxin acts on sphingomyelin (SM). It may also act on ceramide phosphoethanolamine (CPE), lysophosphatidylcholine (LPC) and lysophosphatidylethanolamine (LPE), but not on lysophosphatidylserine (LPS), and lysophosphatidylglycerol (LPG). It acts by transphosphatidylation, releasing exclusively cyclic phosphate products as second products. Induces dermonecrosis, hemolysis, increased vascular permeability, edema, inflammatory response, and platelet aggregation. The chain is Dermonecrotic toxin LhSicTox-alphaIA1i from Loxosceles hirsuta (Recluse spider).